The following is a 162-amino-acid chain: Protein A49R (162 aa).

The protein belongs to the poxviridae A49 protein family. As to quaternary structure, interacts with host BTRC; this interaction inhibits NF-kappa-B activation.

It is found in the host cytoplasm. The protein resides in the host nucleus. Plays a role in the inhibition of host NF-kappa-B activation. Interacts with host BTRC and thereby diminishes ubiquitination of NF-kappa-B inhibitor alpha/NFKBIA. This stabilizes NFKBIA and its interaction with NF-kappaB, so retaining p65/RELA in the cytoplasm and preventing NF-kappa-B-dependent gene expression. The protein is Protein A49R of Bos taurus (Bovine).